The primary structure comprises 292 residues: Potassium channel, subfamily K, member 16 (292 aa).

Over 1–13 the chain is Cytoplasmic; that stretch reads MPRAGVCGCWGGQ. The chain crosses the membrane as a helical span at residues 14-34; the sequence is VLPLLLAYICYLLLGATIFQL. The pore-forming intramembrane region spans 98–116; the sequence is SFFFAGTVVTTIGYGNLAP. K(+)-binding residues include Thr-108, Ile-109, Gly-110, and Tyr-111. Residues 108–113 form a selectivity filter 1 region; sequence TIGYGN. A helical transmembrane segment spans residues 120–140; it reads AGQVFCVFYALMGIPLNVVFL. Topologically, residues 141 to 165 are cytoplasmic; sequence NHLGTGLRAHLTTLDRWEDHPRHSQ. The helical transmembrane segment at 166–186 threads the bilayer; the sequence is LLQVLGLALFLTLGTLVILIF. The pore-forming intramembrane region spans 202 to 221; the sequence is GFYFAFITLSTIGFGDYVVG. K(+)-binding residues include Thr-212, Ile-213, Gly-214, and Phe-215. A selectivity filter 2 region spans residues 212–217; it reads TIGFGD. The chain crosses the membrane as a helical span at residues 238 to 258; the sequence is IWILLGLAWLAVVLSLGSLLL. Residues 259–292 lie on the Cytoplasmic side of the membrane; that stretch reads HRCSRLWQLIRGLDLKDGAAPDSEPRSQKIPISA.

This sequence belongs to the two pore domain potassium channel (TC 1.A.1.8) family. In terms of assembly, homodimer; disulfide-linked. Heterodimer with KCNK17 and KCNK5. As to expression, expressed in pacreatic beta-cells (at protein level). Expressed in pacreatic delta-cells (at protein level).

It is found in the cell membrane. It localises to the endoplasmic reticulum membrane. Its subcellular location is the mitochondrion inner membrane. It catalyses the reaction K(+)(in) = K(+)(out). The catalysed reaction is Rb(+)(in) = Rb(+)(out). It carries out the reaction Cs(+)(in) = Cs(+)(out). Functionally, k(+) channel that conducts voltage-dependent outward rectifying currents upon membrane depolarization. Voltage sensing is coupled to K(+) electrochemical gradient in an 'ion flux gating' mode where outward but not inward ion flow opens the gate. Homo- and heterodimerizes to form functional channels with distinct regulatory and gating properties. In pancreatic islets, conducts K(+) countercurrents for Ca(2+) release from the endoplasmic reticulum (ER) and regulates the frequency and duration of cytosolic Ca(2+) oscillations coupled to secretion of pancreatic hormones. In pancreatic beta cells, drives ER Ca(2+) efflux, which in turn activates Ca(2+)-dependent plasma membrane K(+) slow currents and cytosolic Ca(2+) influx, overall contributing to synchronous cytosolic Ca(2+) oscillations. Limits glucose-induced cytosolic Ca(2+) oscillations coupled to second-phase INS secretion. Contributes to beta cell adaptation to acute inflammation by maintaining normal cytosolic Ca(2+) levels and INS secretion. May regulate beta cell mitochondrial Ca(2+) levels either indirectly via ER Ca(2+) efflux or directly by hyperpolarizing the mitochondrial membrane potential. Limits mitochondrial Ca(2+) oscillations and ATP production involved in glucose homeostasis upon metabolic stress. In pancreatic delta cells, limits Ca(2+)-induced Ca(2+)-release involved in somatostatin secretion and modulates islet paracrine signaling involved in glucagon secretion. Permeable to other monovalent cations such as Rb(+) and Cs(+). The protein is Potassium channel, subfamily K, member 16 of Mus musculus (Mouse).